A 570-amino-acid chain; its full sequence is MTESIISSRTASISSKEGYEIRQGSTDSSSLDLEKKENAVDTTIAKPFDSDEDIADVEKAGGKKINNSLIDETFAFMQDAKKLDPLTPKQESKLKWKLYIYLLLMLGFLDMMLFIGKATLSYSTILGLFDDVHITSNQYNNLNTLFYVGYIVGQFPGHYIMQTFPLGKFVGLVTFSWSVIVFLHCCAYNYGGLIALRFFLGFTESCLLPAMEATMGMFFTHQEQAFLQPVFWISCLSCGIPAGFIAYGLEFVTKSIAPWKLFMIITGGITFFLSIFLFFYYPDNPSKARFLTDEEKLYTIDRVRKSTRGGIENKIFKKHQFIEALKDPITWLFTFAAFTLMLSNNLAYQQNLIFTSLNVSDLNSTLVGVALAGYNTVSAIIATFAMYLIPNQSAYHAMFWMLPSITGGIAFVALPWSNRIGELATMIIASDFGITYIIALGWTTATSTGYTKKLTRGLMFMVGYAIANIISPQLWQSRDAPRYYPAWIVQIVVAWFVTPIIYLVARVILARRNKQRKELKDKKIAEGSLETIEKTYVDTVDEFGNPVKVLIDNSMLDLTDMENLNFVYPL.

Low complexity predominate over residues 1–15 (MTESIISSRTASISS). Positions 1 to 34 (MTESIISSRTASISSKEGYEIRQGSTDSSSLDLE) are disordered. Residue Ser14 is modified to Phosphoserine. A run of 12 helical transmembrane segments spans residues 96 to 116 (WKLYIYLLLMLGFLDMMLFIG), 141 to 161 (NLNTLFYVGYIVGQFPGHYIM), 163 to 183 (TFPLGKFVGLVTFSWSVIVFL), 198 to 218 (FFLGFTESCLLPAMEATMGMF), 229 to 249 (PVFWISCLSCGIPAGFIAYGL), 261 to 281 (LFMIITGGITFFLSIFLFFYY), 328 to 348 (PITWLFTFAAFTLMLSNNLAY), 369 to 389 (VALAGYNTVSAIIATFAMYLI), 397 to 417 (AMFWMLPSITGGIAFVALPWS), 423 to 443 (LATMIIASDFGITYIIALGWT), 457 to 477 (GLMFMVGYAIANIISPQLWQS), and 485 to 505 (PAWIVQIVVAWFVTPIIYLVA).

This sequence belongs to the major facilitator superfamily. Allantoate permease family.

The protein localises to the endoplasmic reticulum. The protein resides in the membrane. This is an uncharacterized protein from Schizosaccharomyces pombe (strain 972 / ATCC 24843) (Fission yeast).